The chain runs to 162 residues: Cytochrome c-type biogenesis protein CcmE (162 aa).

Residues 1–8 (MNPVRKKR) lie on the Cytoplasmic side of the membrane. Residues 9–29 (LIIVLAIVAGVGAAVGLALSA) traverse the membrane as a helical; Signal-anchor for type II membrane protein segment. The Periplasmic segment spans residues 30 to 162 (LQQNINLFYT…GETSYNQEGK (133 aa)). Residues His124 and Tyr128 each contribute to the heme site. The segment covering 139 to 148 (DSGQLKHYEN) has biased composition (basic and acidic residues). The interval 139 to 162 (DSGQLKHYENGKAAGETSYNQEGK) is disordered.

The protein belongs to the CcmE/CycJ family.

Its subcellular location is the cell inner membrane. Its function is as follows. Heme chaperone required for the biogenesis of c-type cytochromes. Transiently binds heme delivered by CcmC and transfers the heme to apo-cytochromes in a process facilitated by CcmF and CcmH. The polypeptide is Cytochrome c-type biogenesis protein CcmE (Pseudomonas aeruginosa (strain ATCC 15692 / DSM 22644 / CIP 104116 / JCM 14847 / LMG 12228 / 1C / PRS 101 / PAO1)).